Consider the following 402-residue polypeptide: Tyrosine--tRNA ligase (402 aa).

A 'HIGH' region motif is present at residues 47-56 (PTAPDLHLGH). Positions 232-236 (KMSKS) match the 'KMSKS' region motif. Residue Lys235 coordinates ATP. The 61-residue stretch at 341 to 401 (VGILDVLKQI…GKKRFMKLNI (61 aa)) folds into the S4 RNA-binding domain.

This sequence belongs to the class-I aminoacyl-tRNA synthetase family. TyrS type 2 subfamily. As to quaternary structure, homodimer.

The protein localises to the cytoplasm. The enzyme catalyses tRNA(Tyr) + L-tyrosine + ATP = L-tyrosyl-tRNA(Tyr) + AMP + diphosphate + H(+). Catalyzes the attachment of tyrosine to tRNA(Tyr) in a two-step reaction: tyrosine is first activated by ATP to form Tyr-AMP and then transferred to the acceptor end of tRNA(Tyr). In Helicobacter pylori (strain ATCC 700392 / 26695) (Campylobacter pylori), this protein is Tyrosine--tRNA ligase.